Here is a 94-residue protein sequence, read N- to C-terminus: Co-chaperonin GroES (94 aa).

Belongs to the GroES chaperonin family. Heptamer of 7 subunits arranged in a ring. Interacts with the chaperonin GroEL.

It localises to the cytoplasm. Together with the chaperonin GroEL, plays an essential role in assisting protein folding. The GroEL-GroES system forms a nano-cage that allows encapsulation of the non-native substrate proteins and provides a physical environment optimized to promote and accelerate protein folding. GroES binds to the apical surface of the GroEL ring, thereby capping the opening of the GroEL channel. In Listeria innocua serovar 6a (strain ATCC BAA-680 / CLIP 11262), this protein is Co-chaperonin GroES.